The following is a 251-amino-acid chain: Fibroblast growth factor 23 (251 aa).

The signal sequence occupies residues M1 to A24. Cysteines 95 and 113 form a disulfide. Residues T171 and T178 are each glycosylated (O-linked (GalNAc) threonine). Positions R175 to V251 are disordered. The span at R179–P189 shows a compositional bias: basic and acidic residues. Position 180 is a phosphoserine; by FAM20C (S180).

Belongs to the heparin-binding growth factors family. In terms of assembly, interacts with FGFR1. Interacts with FGFR2, FGFR3 and FGFR4. Affinity between fibroblast growth factors (FGFs) and their receptors is increased by KL and heparan sulfate glycosaminoglycans that function as coreceptors. In terms of processing, following secretion this protein is inactivated by cleavage into a N-terminal fragment and a C-terminal fragment. The processing is effected by proprotein convertases. O-glycosylated at Thr-171 and Thr-178 by GALNT3 and glycosylation of Thr-178 requires previous glycosylation at Thr171. Glycosylation is necessary for secretion; it blocks processing by proprotein convertases when the O-glycan is alpha 2,6-sialylated. Competition between proprotein convertase cleavage and block of cleavage by O-glycosylation determines the level of secreted active FGF23. Post-translationally, phosphorylation at Ser-180 mediated by FAM20C slows down glycosylation at Thr-178 notably. In terms of tissue distribution, mainly expressed in the brain and thymus at low levels. In brain; preferentially expressed in the ventrolateral thalamic nucleus.

It localises to the secreted. Regulator of phosphate homeostasis. Inhibits renal tubular phosphate transport by reducing SLC34A1 levels. Acts directly on the parathyroid to decrease PTH secretion. Regulator of vitamin-D metabolism. Negatively regulates osteoblasts differentiation and matrix mineralization. Up-regulates EGR1 expression in the presence of KL. The sequence is that of Fibroblast growth factor 23 (Fgf23) from Mus musculus (Mouse).